Reading from the N-terminus, the 652-residue chain is ATP-dependent zinc metalloprotease FtsH (652 aa).

Over 1–11 the chain is Cytoplasmic; it reads MKKQNNGLIKN. A helical transmembrane segment spans residues 12-32; that stretch reads PFLWLLFIFFLVTGFQYFYSG. Residues 33–131 are Extracellular-facing; that stretch reads NNSGGSQQIN…EVTVKHESSS (99 aa). Residues 132–152 traverse the membrane as a helical segment; the sequence is GIWINLLVSIVPFGILFFFLF. Over 153–652 the chain is Cytoplasmic; that stretch reads SMMGNMGGGN…EVKSKMNDEK (500 aa). Residue 227 to 234 participates in ATP binding; it reads GPPGTGKT. H449 serves as a coordination point for Zn(2+). The active site involves E450. 2 residues coordinate Zn(2+): H453 and D525. Residues 628–652 form a disordered region; it reads MPEAVEEESHALSYDEVKSKMNDEK. The span at 634-652 shows a compositional bias: basic and acidic residues; that stretch reads EESHALSYDEVKSKMNDEK.

In the central section; belongs to the AAA ATPase family. The protein in the C-terminal section; belongs to the peptidase M41 family. In terms of assembly, homohexamer. Requires Zn(2+) as cofactor.

It is found in the cell membrane. In terms of biological role, acts as a processive, ATP-dependent zinc metallopeptidase for both cytoplasmic and membrane proteins. Plays a role in the quality control of integral membrane proteins. In Streptococcus pneumoniae (strain ATCC BAA-255 / R6), this protein is ATP-dependent zinc metalloprotease FtsH.